The sequence spans 427 residues: Glutamate-1-semialdehyde 2,1-aminomutase (427 aa).

Lysine 265 is subject to N6-(pyridoxal phosphate)lysine.

This sequence belongs to the class-III pyridoxal-phosphate-dependent aminotransferase family. HemL subfamily. In terms of assembly, homodimer. Requires pyridoxal 5'-phosphate as cofactor.

Its subcellular location is the cytoplasm. It carries out the reaction (S)-4-amino-5-oxopentanoate = 5-aminolevulinate. The protein operates within porphyrin-containing compound metabolism; protoporphyrin-IX biosynthesis; 5-aminolevulinate from L-glutamyl-tRNA(Glu): step 2/2. In Pseudomonas putida (strain ATCC 700007 / DSM 6899 / JCM 31910 / BCRC 17059 / LMG 24140 / F1), this protein is Glutamate-1-semialdehyde 2,1-aminomutase.